The primary structure comprises 383 residues: Dual-specificity RNA methyltransferase RlmN (383 aa).

Glu94 functions as the Proton acceptor in the catalytic mechanism. A Radical SAM core domain is found at Asp100–Asp339. Cysteines 107 and 344 form a disulfide. [4Fe-4S] cluster is bound by residues Cys114, Cys118, and Cys121. S-adenosyl-L-methionine is bound by residues Gly168 to Glu169, Ser200, Ser222 to His224, and Asn301. Residue Cys344 is the S-methylcysteine intermediate of the active site.

Belongs to the radical SAM superfamily. RlmN family. The cofactor is [4Fe-4S] cluster.

Its subcellular location is the cytoplasm. The catalysed reaction is adenosine(2503) in 23S rRNA + 2 reduced [2Fe-2S]-[ferredoxin] + 2 S-adenosyl-L-methionine = 2-methyladenosine(2503) in 23S rRNA + 5'-deoxyadenosine + L-methionine + 2 oxidized [2Fe-2S]-[ferredoxin] + S-adenosyl-L-homocysteine. The enzyme catalyses adenosine(37) in tRNA + 2 reduced [2Fe-2S]-[ferredoxin] + 2 S-adenosyl-L-methionine = 2-methyladenosine(37) in tRNA + 5'-deoxyadenosine + L-methionine + 2 oxidized [2Fe-2S]-[ferredoxin] + S-adenosyl-L-homocysteine. Specifically methylates position 2 of adenine 2503 in 23S rRNA and position 2 of adenine 37 in tRNAs. m2A2503 modification seems to play a crucial role in the proofreading step occurring at the peptidyl transferase center and thus would serve to optimize ribosomal fidelity. The chain is Dual-specificity RNA methyltransferase RlmN from Aliivibrio salmonicida (strain LFI1238) (Vibrio salmonicida (strain LFI1238)).